The following is a 459-amino-acid chain: Exodeoxyribonuclease 7 large subunit (459 aa).

The protein belongs to the XseA family. In terms of assembly, heterooligomer composed of large and small subunits.

It is found in the cytoplasm. It catalyses the reaction Exonucleolytic cleavage in either 5'- to 3'- or 3'- to 5'-direction to yield nucleoside 5'-phosphates.. Functionally, bidirectionally degrades single-stranded DNA into large acid-insoluble oligonucleotides, which are then degraded further into small acid-soluble oligonucleotides. The chain is Exodeoxyribonuclease 7 large subunit from Pseudomonas fluorescens (strain Pf0-1).